The sequence spans 278 residues: Indole-3-glycerol phosphate synthase (278 aa).

This sequence belongs to the TrpC family.

The enzyme catalyses 1-(2-carboxyphenylamino)-1-deoxy-D-ribulose 5-phosphate + H(+) = (1S,2R)-1-C-(indol-3-yl)glycerol 3-phosphate + CO2 + H2O. The protein operates within amino-acid biosynthesis; L-tryptophan biosynthesis; L-tryptophan from chorismate: step 4/5. The sequence is that of Indole-3-glycerol phosphate synthase from Stutzerimonas stutzeri (strain A1501) (Pseudomonas stutzeri).